Consider the following 2170-residue polypeptide: Brefeldin A-inhibited guanine nucleotide-exchange protein 3 (2170 aa).

At Ser-471 the chain carries Phosphoserine. 2 disordered regions span residues 489 to 547 (EHTP…MGKV) and 613 to 634 (AAEKDSGRSDVSDIGSDNCSLA). Residues 503–524 (ISISVTTDTGQTTLEGELGQTT) are compositionally biased toward polar residues. An SEC7 domain is found at 579–792 (RTRSYGSRYS…EELYHQVLDR (214 aa)). Positions 614-623 (AEKDSGRSDV) are enriched in basic and acidic residues. Phosphoserine occurs at positions 628, 632, and 1045. Residues 1488 to 1508 (PGFGIYAVVHLLLPVMSLWLL) form a helical membrane-spanning segment. The disordered stretch occupies residues 1843-1872 (SSDSSQQCSSEDEDIFEETAQVSPPRGKEK). Position 1881 is a phosphoserine (Ser-1881). The span at 1938 to 1955 (FQSESSTPSTGGFSGKNT) shows a compositional bias: polar residues. Disordered stretches follow at residues 1938 to 1997 (FQSE…RKKE) and 2024 to 2058 (KRRQPHNLPPFPKEVKVDKKGEPLGPRGPDSPLLQ). Positions 1956 to 1966 (PSEDDRREHLS) are enriched in basic and acidic residues. Residues Ser-1975 and Ser-1984 each carry the phosphoserine modification. 2 stretches are compositionally biased toward basic and acidic residues: residues 1986 to 1997 (KTEKKDPGRKKE) and 2036 to 2045 (KEVKVDKKGE). Phosphoserine is present on residues Ser-2072, Ser-2074, Ser-2088, Ser-2094, and Ser-2096. The tract at residues 2078–2097 (ELLRQEKRPRSGSTGSSLSV) is disordered. Residues 2088-2097 (SGSTGSSLSV) show a composition bias toward low complexity.

As to quaternary structure, interacts with PHB2. Expressed in pancreatic islet (insulin granules of islet alpha and beta cells) and brain (at protein level).

Its subcellular location is the cytoplasmic vesicle. It is found in the secretory vesicle. The protein resides in the secretory vesicle membrane. In terms of biological role, participates in the regulation of systemic glucose homeostasis, where it negatively regulates insulin granule biogenesis in pancreatic islet beta cells. Also regulates glucagon granule production in pancreatic alpha cells. Inhibits nuclear translocation of the transcriptional coregulator PHB2 and may enhance estrogen receptor alpha (ESR1) transcriptional activity in breast cancer cells. This chain is Brefeldin A-inhibited guanine nucleotide-exchange protein 3, found in Mus musculus (Mouse).